The chain runs to 407 residues: Chorismate synthase (407 aa).

NADP(+) contacts are provided by Arg-40 and Arg-46. FMN is bound by residues 135 to 137, 256 to 257, Gly-300, 315 to 319, and Arg-341; these read RAS, QA, and KPIST.

This sequence belongs to the chorismate synthase family. Homotetramer. The cofactor is FMNH2.

It carries out the reaction 5-O-(1-carboxyvinyl)-3-phosphoshikimate = chorismate + phosphate. It functions in the pathway metabolic intermediate biosynthesis; chorismate biosynthesis; chorismate from D-erythrose 4-phosphate and phosphoenolpyruvate: step 7/7. In terms of biological role, catalyzes the anti-1,4-elimination of the C-3 phosphate and the C-6 proR hydrogen from 5-enolpyruvylshikimate-3-phosphate (EPSP) to yield chorismate, which is the branch point compound that serves as the starting substrate for the three terminal pathways of aromatic amino acid biosynthesis. This reaction introduces a second double bond into the aromatic ring system. The chain is Chorismate synthase from Mycobacterium leprae (strain Br4923).